Consider the following 994-residue polypeptide: Chloride channel protein E (994 aa).

The disordered stretch occupies residues 1–33; the sequence is MTRKENEESESLSSSSSPIDNSNNNNNNNNHSI. Residues 1–163 lie on the Cytoplasmic side of the membrane; sequence MTRKENEESE…HWLGKERIST (163 aa). A compositionally biased stretch (low complexity) spans 11-32; the sequence is SLSSSSSPIDNSNNNNNNNNHS. 11 consecutive transmembrane segments (helical) span residues 164–184, 227–247, 271–291, 300–320, 334–354, 362–382, 410–430, 449–469, 505–525, 527–547, and 554–574; these read LLFI…CDFL, IVFV…ISFI, VLGF…SAAG, FMHA…FGAI, ALTS…LFAI, VMGN…IFFL, LITF…FVFI, IILV…AGPL, LLVF…LPIP, GAIT…GEIL, and QAIE…SGTI. The 62-residue stretch at 644-705 folds into the CBS 1 domain; that stretch reads MKKNINYLSM…LDIHIENIEQ (62 aa). Disordered stretches follow at residues 715–767, 802–822, and 846–872; these read FVNN…NSEN, IKPN…SDFE, and DENS…GDGI. 2 stretches are compositionally biased toward low complexity: residues 717-764 and 809-822; these read NNNN…NSNN and SSSN…SDFE. Residues 859–870 show a composition bias toward acidic residues; it reads HDDEDDDEEEGD. Positions 944-994 constitute a CBS 2 domain; it reads MDLAPSQVPDLTPLNKVFHLFTMLGLGFTYVTSLGKLVGVITKNSLMEQDL.

This sequence belongs to the chloride channel (TC 2.A.49) family.

The protein resides in the membrane. In terms of biological role, voltage-gated chloride channel. Chloride channels may have several functions including the regulation of cell volume, membrane potential stabilization and signal transduction. The polypeptide is Chloride channel protein E (clcE) (Dictyostelium discoideum (Social amoeba)).